The following is a 252-amino-acid chain: Putative peptide zinc metalloprotease protein YydH (252 aa).

The next 2 membrane-spanning stretches (helical) occupy residues 56-76 (FFYL…IHLI) and 85-105 (VFYG…NIVL). A Zn(2+)-binding site is contributed by His-106. The active site involves Glu-107. His-110 provides a ligand contact to Zn(2+). The next 3 membrane-spanning stretches (helical) occupy residues 152-172 (IIVH…LELI), 181-201 (ALTM…IPIL), and 231-251 (IQII…LYIV).

It belongs to the peptidase M50B family. Requires Zn(2+) as cofactor.

Its subcellular location is the cell membrane. Functionally, required for production of the modified peptide YydF. May process the precursor form of YydF to release the active peptide (Potential). The polypeptide is Putative peptide zinc metalloprotease protein YydH (yydH) (Bacillus subtilis (strain 168)).